Consider the following 545-residue polypeptide: CTP synthase (545 aa).

Residues 1–265 (MSKYIFVTGG…LVPIAKQLDL (265 aa)) form an amidoligase domain region. S13 contacts CTP. Residue S13 participates in UTP binding. ATP is bound by residues 14-19 (SLGKGI) and D71. Residues D71 and E139 each contribute to the Mg(2+) site. CTP is bound by residues 146–148 (DIE), 186–191 (KTKPTQ), and K222. UTP is bound by residues 186 to 191 (KTKPTQ) and K222. The region spanning 290-544 (KIAFVGKYLQ…VENAYKCQRS (255 aa)) is the Glutamine amidotransferase type-1 domain. An L-glutamine-binding site is contributed by G355. The active-site Nucleophile; for glutamine hydrolysis is C382. Residues 383 to 386 (LGMQ), E406, and R473 contribute to the L-glutamine site. Active-site residues include H517 and E519.

Belongs to the CTP synthase family. In terms of assembly, homotetramer.

The enzyme catalyses UTP + L-glutamine + ATP + H2O = CTP + L-glutamate + ADP + phosphate + 2 H(+). The catalysed reaction is L-glutamine + H2O = L-glutamate + NH4(+). It catalyses the reaction UTP + NH4(+) + ATP = CTP + ADP + phosphate + 2 H(+). It participates in pyrimidine metabolism; CTP biosynthesis via de novo pathway; CTP from UDP: step 2/2. Its activity is regulated as follows. Allosterically activated by GTP, when glutamine is the substrate; GTP has no effect on the reaction when ammonia is the substrate. The allosteric effector GTP functions by stabilizing the protein conformation that binds the tetrahedral intermediate(s) formed during glutamine hydrolysis. Inhibited by the product CTP, via allosteric rather than competitive inhibition. In terms of biological role, catalyzes the ATP-dependent amination of UTP to CTP with either L-glutamine or ammonia as the source of nitrogen. Regulates intracellular CTP levels through interactions with the four ribonucleotide triphosphates. The polypeptide is CTP synthase (Nautilia profundicola (strain ATCC BAA-1463 / DSM 18972 / AmH)).